The following is a 245-amino-acid chain: 8-amino-3,8-dideoxy-manno-octulosonate cytidylyltransferase (245 aa).

Belongs to the KdsB family.

The protein localises to the cytoplasm. It catalyses the reaction 8-amino-3,8-dideoxy-alpha-D-manno-octulosonate + CTP = CMP-8-amino-3,8-dideoxy-alpha-D-manno-oct-2-ulosonate + diphosphate. It participates in bacterial outer membrane biogenesis; lipopolysaccharide biosynthesis. Functionally, activates KDO8N (a required 8-carbon sugar) for incorporation into bacterial lipopolysaccharide in the Shewanella genus. The chain is 8-amino-3,8-dideoxy-manno-octulosonate cytidylyltransferase from Shewanella halifaxensis (strain HAW-EB4).